The chain runs to 178 residues: Lipid A deacylase PagL (178 aa).

An N-terminal signal peptide occupies residues 1–19 (MQFLKKNKPLFGIVTLALA). Active-site charge relay system residues include His154, Ser156, and Asp168.

It belongs to the PagL family. As to quaternary structure, homodimer.

The protein localises to the cell outer membrane. It carries out the reaction a 3-(acyloxy)acyl derivative of bacterial toxin + H2O = a 3-hydroxyacyl derivative of bacterial toxin + a fatty acid + H(+). Functionally, has lipid A 3-O-deacylase activity. Hydrolyzes the ester bond at the 3 position of lipid A, a bioactive component of lipopolysaccharide (LPS), thereby releasing the primary fatty acyl moiety. The polypeptide is Lipid A deacylase PagL (Bordetella bronchiseptica (strain ATCC BAA-588 / NCTC 13252 / RB50) (Alcaligenes bronchisepticus)).